The chain runs to 69 residues: Putative antitoxin AF_1481 (69 aa).

Belongs to the UPF0330 family.

Functionally, possibly the antitoxin component of a type II toxin-antitoxin (TA) system. The sequence is that of Putative antitoxin AF_1481 from Archaeoglobus fulgidus (strain ATCC 49558 / DSM 4304 / JCM 9628 / NBRC 100126 / VC-16).